The sequence spans 342 residues: L-threonine 3-dehydrogenase (342 aa).

Cysteine 38 contacts Zn(2+). Catalysis depends on charge relay system residues threonine 40 and histidine 43. Zn(2+) is bound by residues histidine 63, glutamate 64, cysteine 93, cysteine 96, cysteine 99, and cysteine 107. Residues isoleucine 175, aspartate 195, arginine 200, 262-264 (LGI), and 286-287 (IY) each bind NAD(+).

The protein belongs to the zinc-containing alcohol dehydrogenase family. In terms of assembly, homotetramer. It depends on Zn(2+) as a cofactor.

The protein resides in the cytoplasm. The catalysed reaction is L-threonine + NAD(+) = (2S)-2-amino-3-oxobutanoate + NADH + H(+). It participates in amino-acid degradation; L-threonine degradation via oxydo-reductase pathway; glycine from L-threonine: step 1/2. In terms of biological role, catalyzes the NAD(+)-dependent oxidation of L-threonine to 2-amino-3-ketobutyrate. This chain is L-threonine 3-dehydrogenase, found in Aeromonas salmonicida (strain A449).